A 742-amino-acid polypeptide reads, in one-letter code: Clamp-binding protein CrfC (742 aa).

The tract at residues 41 to 45 (QLALP) is clamp-binding consensus. One can recognise a Dynamin-type G domain in the interval 66-402 (SRLEMVLAIV…LWEDSLFAQP (337 aa)). Residues 76–83 (GTMKAGKS) form a G1 motif region. Residues 102-104 (MTA) are G2 motif. Residues 236–239 (DTPG) are G3 motif. The interval 297–300 (NKFD) is G4 motif. The segment at 331–334 (FPVS) is G5 motif. The stretch at 440–472 (RAHGLNVACEQLRQNIHQIEESLQLLQLNQAQV) forms a coiled coil.

This sequence belongs to the TRAFAC class dynamin-like GTPase superfamily. Dynamin/Fzo/YdjA family. In terms of assembly, forms homooligomers. Binds to the beta sliding clamp processivity factor (DnaN) in the presence and absence of DNA, may bind to the clamp itself as homodimers or trimers. Homooligomers may be able to bind more than 1 clamp complex.

The protein resides in the cytoplasm. Its function is as follows. Important for the colocalization of sister nascent DNA strands after replication fork passage during DNA replication, and for positioning and subsequent partitioning of sister chromosomes. Does not have GTPase activity on its own. The protein is Clamp-binding protein CrfC (crfC) of Escherichia coli (strain K12).